A 208-amino-acid chain; its full sequence is Ribosomal RNA small subunit methyltransferase G (208 aa).

S-adenosyl-L-methionine is bound by residues Gly-76, Leu-81, 127–128 (VE), and Arg-142.

Belongs to the methyltransferase superfamily. RNA methyltransferase RsmG family.

It localises to the cytoplasm. The catalysed reaction is guanosine(527) in 16S rRNA + S-adenosyl-L-methionine = N(7)-methylguanosine(527) in 16S rRNA + S-adenosyl-L-homocysteine. Functionally, specifically methylates the N7 position of guanine in position 527 of 16S rRNA. This is Ribosomal RNA small subunit methyltransferase G from Legionella pneumophila (strain Corby).